The sequence spans 256 residues: Omega-amidase YafV (256 aa).

Residues 4–234 form the CN hydrolase domain; the sequence is LKLTLLQQPL…AAQLDAELSL (231 aa). Glu-42 functions as the Proton acceptor in the catalytic mechanism. Lys-107 is a catalytic residue. Cys-141 serves as the catalytic Nucleophile.

The protein belongs to the carbon-nitrogen hydrolase superfamily. NIT1/NIT2 family.

The catalysed reaction is a monoamide of a dicarboxylate + H2O = a dicarboxylate + NH4(+). In terms of biological role, hydrolyzes alpha-ketoglutaramate (a-KGM) to alpha-ketoglutarate (alpha-KG) and ammonia (specific activity 21 umol/min/mg), has very weak activity on L-glutamine, and no activity on deaminated glutathione (dGSH) or glutathione. May function as a metabolite repair enzyme. This Yersinia enterocolitica protein is Omega-amidase YafV.